Here is a 180-residue protein sequence, read N- to C-terminus: GTP cyclohydrolase 1 (180 aa).

Zn(2+) contacts are provided by Cys71, His74, and Cys142.

The protein belongs to the GTP cyclohydrolase I family. As to quaternary structure, homomer.

It carries out the reaction GTP + H2O = 7,8-dihydroneopterin 3'-triphosphate + formate + H(+). The protein operates within cofactor biosynthesis; 7,8-dihydroneopterin triphosphate biosynthesis; 7,8-dihydroneopterin triphosphate from GTP: step 1/1. In Helicobacter pylori (strain G27), this protein is GTP cyclohydrolase 1.